Here is a 516-residue protein sequence, read N- to C-terminus: uncharacterized protein (516 aa).

Residues 31 to 185 (ACIFLSKFDM…LDKFDIFEKF (155 aa)) form the uDENN domain. Residues 211 to 365 (HLVEYLPYWT…LEVYEKLILG (155 aa)) form the cDENN domain. A dDENN domain is found at 367-513 (LQEDASTNAT…DISNLPECLG (147 aa)). 2 S-palmitoyl cysteine lipidation sites follow: C511 and C516.

In terms of processing, palmitoylated by AKR1.

It is found in the lipid droplet. Its function is as follows. May be involved in lipid metabolism. This is an uncharacterized protein from Saccharomyces cerevisiae (strain ATCC 204508 / S288c) (Baker's yeast).